Consider the following 425-residue polypeptide: Synaptotagmin-4 (425 aa).

The Vesicular segment spans residues Met-1–Thr-16. The chain crosses the membrane as a helical span at residues Val-17 to Cys-37. Over Cys-38–Gly-425 the chain is Cytoplasmic. Disordered regions lie at residues Asn-102–Val-121 and Phe-126–Ser-147. Polar residues predominate over residues Phe-105–Glu-119. Ser-135 carries the phosphoserine; by MAPK8 modification. Over residues Glu-137–Thr-146 the composition is skewed to low complexity. 2 consecutive C2 domains span residues Lys-153–Thr-274 and Gly-287–His-420. Positions 246, 249, and 252 each coordinate Ca(2+).

The protein belongs to the synaptotagmin family. As to quaternary structure, interacts with KIF1A; the interaction increases in presence of calcium and decreases when SYT4 is phosphorylated at Ser-135. It depends on Ca(2+) as a cofactor. In terms of processing, phosphorylation at Ser-135 by MAPK8/JNK1 reduces interaction with KIF1A and neuronal dense core vesicles mobility. In terms of tissue distribution, widely expressed. Expressed in the brain. Expressed in pituitary gland, cerebellum, cortex, hypothalamus and hippocampus.

It is found in the cytoplasmic vesicle. It localises to the secretory vesicle. Its subcellular location is the neuronal dense core vesicle membrane. Synaptotagmin family member which does not bind Ca(2+). Involved in neuronal dense core vesicles (DCVs) mobility through its interaction with KIF1A. Upon increased neuronal activity, phosphorylation by MAPK8/JNK1 destabilizes the interaction with KIF1A and captures DCVs to synapses. Plays a role in dendrite formation by melanocytes. In Rattus norvegicus (Rat), this protein is Synaptotagmin-4 (Syt4).